Reading from the N-terminus, the 199-residue chain is Protein-methionine-sulfoxide reductase heme-binding subunit MsrQ (199 aa).

A run of 4 helical transmembrane segments spans residues 10–30 (WLKVCLHLAGFLPLLWLFWAI), 82–102 (LWCFVWATLHLTSYALLELGI), 116–136 (PYLTLGIISWLVLLALTLTST), and 153–173 (VVYLVAILAPIHYLWSVKILS).

This sequence belongs to the MsrQ family. As to quaternary structure, heterodimer of a catalytic subunit (MsrP) and a heme-binding subunit (MsrQ). It depends on FMN as a cofactor. Heme b is required as a cofactor.

It is found in the cell inner membrane. In terms of biological role, part of the MsrPQ system that repairs oxidized periplasmic proteins containing methionine sulfoxide residues (Met-O), using respiratory chain electrons. Thus protects these proteins from oxidative-stress damage caused by reactive species of oxygen and chlorine generated by the host defense mechanisms. MsrPQ is essential for the maintenance of envelope integrity under bleach stress, rescuing a wide series of structurally unrelated periplasmic proteins from methionine oxidation, including the primary periplasmic chaperone SurA and the lipoprotein Pal. MsrQ provides electrons for reduction to the reductase catalytic subunit MsrP, using the quinone pool of the respiratory chain. The protein is Protein-methionine-sulfoxide reductase heme-binding subunit MsrQ of Salmonella agona (strain SL483).